We begin with the raw amino-acid sequence, 105 residues long: MFVVVETGGKQYKVSVGSMVNVEKLKANVGDEVVLDKVLLVGKEDEVIIGQPYVEGAKVIAKVVRQDKYPKVIVFKFKRKKHYRRKYGHRQPYTQLSIKEIVLPH.

It belongs to the bacterial ribosomal protein bL21 family. As to quaternary structure, part of the 50S ribosomal subunit. Contacts protein L20.

In terms of biological role, this protein binds to 23S rRNA in the presence of protein L20. The polypeptide is Large ribosomal subunit protein bL21 (Dictyoglomus turgidum (strain DSM 6724 / Z-1310)).